A 36-amino-acid chain; its full sequence is Serine protease inhibitor 2 (36 aa).

The Pacifastin domain maps to 1 to 36; that stretch reads EISCEPGTTFQDKCNTCRCGKDGKSAAGCTLKACPQ. 3 cysteine pairs are disulfide-bonded: Cys-4–Cys-19, Cys-14–Cys-34, and Cys-17–Cys-29.

Belongs to the protease inhibitor I19 family. Expressed in hemolymph.

It localises to the secreted. Functionally, probable serine protease inhibitor. In Melanoplus sanguinipes (Migratory grasshopper), this protein is Serine protease inhibitor 2.